A 349-amino-acid polypeptide reads, in one-letter code: Isopentenyl-diphosphate delta-isomerase (349 aa).

9–10 is a binding site for substrate; that stretch reads RK. FMN-binding positions include 65–67, serine 95, and asparagine 124; that span reads AMT. 95-97 provides a ligand contact to substrate; it reads STH. Glutamine 154 provides a ligand contact to substrate. Glutamate 155 is a Mg(2+) binding site. FMN contacts are provided by residues lysine 186, serine 211, threonine 216, 262 to 264, and 283 to 284; these read GLR and SR.

It belongs to the IPP isomerase type 2 family. Homooctamer. Dimer of tetramers. Requires FMN as cofactor. NADPH serves as cofactor. Mg(2+) is required as a cofactor.

The protein resides in the cytoplasm. The enzyme catalyses isopentenyl diphosphate = dimethylallyl diphosphate. Functionally, involved in the biosynthesis of isoprenoids. Catalyzes the 1,3-allylic rearrangement of the homoallylic substrate isopentenyl (IPP) to its allylic isomer, dimethylallyl diphosphate (DMAPP). The sequence is that of Isopentenyl-diphosphate delta-isomerase from Staphylococcus epidermidis (strain ATCC 35984 / DSM 28319 / BCRC 17069 / CCUG 31568 / BM 3577 / RP62A).